The sequence spans 429 residues: Histidine--tRNA ligase (429 aa).

The protein belongs to the class-II aminoacyl-tRNA synthetase family. As to quaternary structure, homodimer.

The protein localises to the cytoplasm. It carries out the reaction tRNA(His) + L-histidine + ATP = L-histidyl-tRNA(His) + AMP + diphosphate + H(+). In Streptococcus pneumoniae (strain CGSP14), this protein is Histidine--tRNA ligase.